The following is a 613-amino-acid chain: Xaa-Pro aminopeptidase ApepP (613 aa).

Arg77 and His388 together coordinate substrate. Positions 408, 419, and 482 each coordinate Mn(2+). Substrate is bound by residues His482, His491, and Glu517. Mn(2+)-binding residues include Glu517 and Glu531.

Belongs to the peptidase M24B family. It depends on Mn(2+) as a cofactor. As to expression, detected in gut, brain, testes and ovary.

It is found in the cytoplasm. It catalyses the reaction Release of any N-terminal amino acid, including proline, that is linked to proline, even from a dipeptide or tripeptide.. Inhibited by the chelating agent EDTA. Divalent metal ions have substrate- and concentration-dependent effects on activity. Activity towards bradykinin is inhibited with increasing Mn(2+) concentration. Activity towards substance P is stimulated by low Mn(2+) concentrations (in the range 10 uM-1 mM) but inhibited by Mn(2+) concentrations in excess of 1 mM. Ca(2+), Mg(2+) and Co(2+) stimulate activity towards substance P at concentrations of 10-100 uM but are inhibitory at concentrations of 1 mM. Zn(2+), Ni(2+) and Cu(2+) strongly inhibit activity towards substance P at concentrations of 1 mM. In terms of biological role, catalyzes the removal of a penultimate prolyl residue from the N-termini of peptides, such as Arg-Pro-Pro. The protein is Xaa-Pro aminopeptidase ApepP of Drosophila melanogaster (Fruit fly).